A 341-amino-acid polypeptide reads, in one-letter code: L-threonine 3-dehydrogenase (341 aa).

A Zn(2+)-binding site is contributed by Cys-38. Catalysis depends on charge relay system residues Thr-40 and His-43. 6 residues coordinate Zn(2+): His-63, Glu-64, Cys-93, Cys-96, Cys-99, and Cys-107. Residues Ile-175, Asp-195, Arg-200, 262–264 (LGI), and 286–287 (IY) each bind NAD(+).

This sequence belongs to the zinc-containing alcohol dehydrogenase family. In terms of assembly, homotetramer. It depends on Zn(2+) as a cofactor.

The protein resides in the cytoplasm. The enzyme catalyses L-threonine + NAD(+) = (2S)-2-amino-3-oxobutanoate + NADH + H(+). It functions in the pathway amino-acid degradation; L-threonine degradation via oxydo-reductase pathway; glycine from L-threonine: step 1/2. In terms of biological role, catalyzes the NAD(+)-dependent oxidation of L-threonine to 2-amino-3-ketobutyrate. The chain is L-threonine 3-dehydrogenase from Cronobacter sakazakii (strain ATCC BAA-894) (Enterobacter sakazakii).